The sequence spans 258 residues: Zinc import ATP-binding protein ZnuC (258 aa).

The ABC transporter domain maps to 7 to 233; sequence ITAKNINHAY…PAFQELFGQG (227 aa). 39–46 serves as a coordination point for ATP; the sequence is GPNGAGKS.

The protein belongs to the ABC transporter superfamily. Zinc importer (TC 3.A.1.15.5) family. The complex is composed of two ATP-binding proteins (ZnuC), two transmembrane proteins (ZnuB) and a solute-binding protein (ZnuA).

The protein resides in the cell inner membrane. It carries out the reaction Zn(2+)(out) + ATP(in) + H2O(in) = Zn(2+)(in) + ADP(in) + phosphate(in) + H(+)(in). In terms of biological role, part of the ABC transporter complex ZnuABC involved in zinc import. Responsible for energy coupling to the transport system. This chain is Zinc import ATP-binding protein ZnuC, found in Hydrogenovibrio crunogenus (strain DSM 25203 / XCL-2) (Thiomicrospira crunogena).